A 249-amino-acid polypeptide reads, in one-letter code: ATP synthase subunit a, chloroplastic (249 aa).

5 helical membrane-spanning segments follow: residues 40–60 (QVLI…VIAI), 97–117 (VPFI…GALL), 136–156 (INTT…AGLS), 201–221 (LVVV…VMFL), and 222–242 (GLFT…AYIG).

It belongs to the ATPase A chain family. In terms of assembly, F-type ATPases have 2 components, CF(1) - the catalytic core - and CF(0) - the membrane proton channel. CF(1) has five subunits: alpha(3), beta(3), gamma(1), delta(1), epsilon(1). CF(0) has four main subunits: a, b, b' and c.

It is found in the plastid. The protein resides in the chloroplast thylakoid membrane. Key component of the proton channel; it plays a direct role in the translocation of protons across the membrane. The sequence is that of ATP synthase subunit a, chloroplastic from Barbarea verna (Land cress).